The primary structure comprises 289 residues: Probable signal peptidase I (289 aa).

Over 1–53 (MTETTDSVPEPPSDADQLQPKVSICGLDMPAEVSETAAEAAIGVSEPKKRSAL) the chain is Cytoplasmic. The chain crosses the membrane as a helical span at residues 54-74 (WEFAILAVIAIGLYYVMLTFV). Over 75-289 (ARPYLIPSES…VGSVNSQQGQ (215 aa)) the chain is Extracellular. Residues Ser84 and Lys162 contribute to the active site.

This sequence belongs to the peptidase S26 family.

The protein resides in the cell membrane. The catalysed reaction is Cleavage of hydrophobic, N-terminal signal or leader sequences from secreted and periplasmic proteins.. The protein is Probable signal peptidase I (lepB) of Mycobacterium leprae (strain TN).